The following is a 90-amino-acid chain: Acylphosphatase (90 aa).

The 86-residue stretch at C5 to L90 folds into the Acylphosphatase-like domain. Active-site residues include R20 and N38.

It belongs to the acylphosphatase family.

It carries out the reaction an acyl phosphate + H2O = a carboxylate + phosphate + H(+). The chain is Acylphosphatase (acyP) from Vibrio vulnificus (strain CMCP6).